The sequence spans 213 residues: Probable glutathione S-transferase DHAR1, cytosolic (213 aa).

Residues Lys-8 and Asp-19 each contribute to the glutathione site. The L-ascorbate site is built by Lys-8 and Asp-19. The region spanning 10 to 89 (AVGHPDTLGD…VIEEKYPTPS (80 aa)) is the GST N-terminal domain. Residue Cys-20 is the Nucleophile of the active site. Glutathione-binding residues include Lys-47, Val-60, Ser-74, His-160, and Trp-207. Positions 73 to 213 (DSDVITQVIE…IAGWAPKVNA (141 aa)) constitute a GST C-terminal domain. Lys-210 serves as a coordination point for L-ascorbate.

This sequence belongs to the GST superfamily. DHAR family. As to quaternary structure, monomer.

The protein resides in the cytoplasm. Its subcellular location is the cytosol. It catalyses the reaction RX + glutathione = an S-substituted glutathione + a halide anion + H(+). The catalysed reaction is L-dehydroascorbate + 2 glutathione = glutathione disulfide + L-ascorbate. In terms of biological role, involved in ascorbate homeostasis. Maintains redox pools of ascorbate by recycling dihydroascorbate (DHA) to ascorbate. Involved in scavenging reactive oxygen species (ROS) under oxidative stresses. Possesses dehydroascorbate reductase (DHAR) activity in vitro. May function via a ping-pong reaction mechanism with an electron transfer at the active site. Possesses chaperone-like activity in vitro. The protein is Probable glutathione S-transferase DHAR1, cytosolic of Oryza sativa subsp. japonica (Rice).